The primary structure comprises 107 residues: Prokineticin-2 (107 aa).

The signal sequence occupies residues 1–26 (MEDPRCAPLLLLLLLPLLLTPPAGDA). Intrachain disulfides connect C33–C45, C39–C57, C44–C85, C67–C93, and C87–C103.

The protein belongs to the AVIT (prokineticin) family. In terms of tissue distribution, expressed at high levels in testis and at lower levels in brain, lung, ovary, spleen, thymus and uterus.

Its subcellular location is the secreted. Functionally, may function as an output molecule from the suprachiasmatic nucleus (SCN) that transmits behavioral circadian rhythm. May also function locally within the SCN to synchronize output. Potently contracts gastrointestinal (GI) smooth muscle. This Rattus norvegicus (Rat) protein is Prokineticin-2 (Prok2).